A 227-amino-acid chain; its full sequence is DNA mismatch repair protein MutH (227 aa).

This sequence belongs to the MutH family.

The protein resides in the cytoplasm. Its function is as follows. Sequence-specific endonuclease that cleaves unmethylated GATC sequences. It is involved in DNA mismatch repair. This chain is DNA mismatch repair protein MutH, found in Vibrio vulnificus (strain CMCP6).